A 590-amino-acid chain; its full sequence is Glutamine--tRNA ligase (590 aa).

Positions 55 to 65 (PEPNGYLHIGH) match the 'HIGH' region motif. ATP contacts are provided by residues 56–58 (EPN) and 62–68 (HIGHAKS). The L-glutamine site is built by Asp-93 and Tyr-238. ATP contacts are provided by residues Thr-257 and 292 to 293 (RL). A 'KMSKS' region motif is present at residues 299–303 (ITSKR).

This sequence belongs to the class-I aminoacyl-tRNA synthetase family. In terms of assembly, monomer.

The protein localises to the cytoplasm. It carries out the reaction tRNA(Gln) + L-glutamine + ATP = L-glutaminyl-tRNA(Gln) + AMP + diphosphate. In Polynucleobacter asymbioticus (strain DSM 18221 / CIP 109841 / QLW-P1DMWA-1) (Polynucleobacter necessarius subsp. asymbioticus), this protein is Glutamine--tRNA ligase.